The sequence spans 525 residues: GMP synthase [glutamine-hydrolyzing] (525 aa).

Residues 13-202 (TILVLDFGSQ…AVDLCHAKQN (190 aa)) enclose the Glutamine amidotransferase type-1 domain. The active-site Nucleophile is the C89. Residues H176 and E178 contribute to the active site. In terms of domain architecture, GMPS ATP-PPase spans 203–400 (WTMKNFIGTE…LGISHELVWR (198 aa)). 231–237 (SGGVDST) contributes to the ATP binding site. XMP is bound by residues R304, D462, K517, and E523.

As to quaternary structure, homodimer. Mg(2+) serves as cofactor.

Its subcellular location is the cytoplasm. It is found in the cytosol. It catalyses the reaction XMP + L-glutamine + ATP + H2O = GMP + L-glutamate + AMP + diphosphate + 2 H(+). It participates in purine metabolism; GMP biosynthesis; GMP from XMP (L-Gln route): step 1/1. Catalyzes the conversion of xanthine monophosphate (XMP) to GMP in the presence of glutamine and ATP through an adenyl-XMP intermediate. In Candida glabrata (strain ATCC 2001 / BCRC 20586 / JCM 3761 / NBRC 0622 / NRRL Y-65 / CBS 138) (Yeast), this protein is GMP synthase [glutamine-hydrolyzing] (GUA1).